A 692-amino-acid polypeptide reads, in one-letter code: Epithelial sodium channel subunit alpha (692 aa).

A disordered region spans residues methionine 1–glutamate 67. Residues methionine 1–alanine 108 are Cytoplasmic-facing. Positions proline 56–threonine 65 are enriched in low complexity. The helical transmembrane segment at phenylalanine 109–phenylalanine 129 threads the bilayer. The Extracellular portion of the chain corresponds to glycine 130 to serine 585. 10 disulfide bridges follow: cysteine 156–cysteine 328, cysteine 252–cysteine 259, cysteine 305–cysteine 312, cysteine 417–cysteine 502, cysteine 439–cysteine 479, cysteine 439–cysteine 498, cysteine 443–cysteine 494, cysteine 452–cysteine 479, cysteine 452–cysteine 502, and cysteine 454–cysteine 468. The tract at residues arginine 198 to serine 266 is gating release of inhibition by proteolysis (GRIP); protease-sensitive region that is responsible for the proteolytic activation of the channel. The chain crosses the membrane as a helical span at residues valine 586–methionine 606. Over leucine 607 to proline 692 the chain is Cytoplasmic. A disordered region spans residues glutamate 627 to proline 692. The span at valine 628 to proline 637 shows a compositional bias: polar residues. Pro residues predominate over residues glycine 653–alanine 666. The short motif at proline 663–tyrosine 667 is the PY motif; recruits WW domain-containing proteins and is thereby required for ubiquitination and inhibition of the channel by NEDD4 and NEDD4L element. Residues alanine 682–proline 692 show a composition bias toward low complexity.

The protein belongs to the amiloride-sensitive sodium channel (TC 1.A.6) family. SCNN1A subfamily. Heterotrimer; containing an alpha/SCNN1A, a beta/SCNN1B and a gamma/SCNN1G subunit. Interacts with WWP1 (via WW domains). Interacts with WWP2 (via WW domains); inhibits the channel. Interacts with BPIFA1; the interaction is indirect via SCNN1B and inhibits the proteolytic processing of SCNN1A and SCNN1G and the activation of ENaC. Interacts with the full-length immature form of PCSK9 (pro-PCSK9). In terms of processing, ubiquitinated. Can be ubiquitinated at multiple sites and undergo monoubiquitination and polyubiquitination. Ubiquitination by NEDD4 or NEDD4L inhibits the ENaC channel through endocytosis, intracellular retention and degradation of its individual subunits. Post-translationally, N-glycosylated. ENaC is activated through the proteolytic maturation of its subunits. Furin cleaves the SCNN1A subunit, which results in a stepwise increase in the open probability of the channel due to the release of an inhibitory tract. BPIFA1, which is recruited by the SCNN1B subunit, prevents the proteolytic activation of ENaC.

The protein resides in the apical cell membrane. Its subcellular location is the cell projection. The protein localises to the cilium. It localises to the cytoplasmic granule. It is found in the cytoplasm. The protein resides in the cytoplasmic vesicle. Its subcellular location is the secretory vesicle. The protein localises to the acrosome. It localises to the flagellum. It catalyses the reaction Na(+)(in) = Na(+)(out). With respect to regulation, originally identified and characterized by its inhibition by the diuretic drug amiloride. Functionally, this is one of the three pore-forming subunits of the heterotrimeric epithelial sodium channel (ENaC), a critical regulator of sodium balance and fluid homeostasis. ENaC operates in epithelial tissues, where it mediates the electrodiffusion of sodium ions from extracellular fluid through the apical membrane of cells, with water following osmotically. It plays a key role in maintaining sodium homeostasis through electrogenic sodium reabsorption in the kidneys. Additionally, ENaC is essential for airway surface liquid homeostasis, which is crucial for proper mucus clearance. In Pan troglodytes (Chimpanzee), this protein is Epithelial sodium channel subunit alpha.